The sequence spans 451 residues: Glucose-6-phosphate isomerase (451 aa).

T38 is modified (phosphothreonine). Catalysis depends on E290, which acts as the Proton donor. Residues H311 and K425 contribute to the active site.

It belongs to the GPI family.

Its subcellular location is the cytoplasm. It catalyses the reaction alpha-D-glucose 6-phosphate = beta-D-fructose 6-phosphate. The protein operates within carbohydrate biosynthesis; gluconeogenesis. It functions in the pathway carbohydrate degradation; glycolysis; D-glyceraldehyde 3-phosphate and glycerone phosphate from D-glucose: step 2/4. Catalyzes the reversible isomerization of glucose-6-phosphate to fructose-6-phosphate. This chain is Glucose-6-phosphate isomerase, found in Shouchella clausii (strain KSM-K16) (Alkalihalobacillus clausii).